The chain runs to 365 residues: 1-aminocyclopropane-1-carboxylate oxidase homolog 9 (365 aa).

The 100-residue stretch at 214 to 313 folds into the Fe2OG dioxygenase domain; it reads KGLLMLCHYY…RISVACFVSS (100 aa). Residues histidine 238, aspartate 240, and histidine 294 each coordinate Fe cation. Arginine 304 lines the 2-oxoglutarate pocket.

Belongs to the iron/ascorbate-dependent oxidoreductase family. The cofactor is Fe(2+).

This chain is 1-aminocyclopropane-1-carboxylate oxidase homolog 9, found in Arabidopsis thaliana (Mouse-ear cress).